Reading from the N-terminus, the 296-residue chain is Bifunctional protein FolD 1/3 (296 aa).

NADP(+) is bound by residues 166-168 (GRS), Ser191, and Ile232.

Belongs to the tetrahydrofolate dehydrogenase/cyclohydrolase family. Homodimer.

It catalyses the reaction (6R)-5,10-methylene-5,6,7,8-tetrahydrofolate + NADP(+) = (6R)-5,10-methenyltetrahydrofolate + NADPH. It carries out the reaction (6R)-5,10-methenyltetrahydrofolate + H2O = (6R)-10-formyltetrahydrofolate + H(+). It participates in one-carbon metabolism; tetrahydrofolate interconversion. Catalyzes the oxidation of 5,10-methylenetetrahydrofolate to 5,10-methenyltetrahydrofolate and then the hydrolysis of 5,10-methenyltetrahydrofolate to 10-formyltetrahydrofolate. The polypeptide is Bifunctional protein FolD 1/3 (Ruegeria pomeroyi (strain ATCC 700808 / DSM 15171 / DSS-3) (Silicibacter pomeroyi)).